Reading from the N-terminus, the 105-residue chain is Nitrogen fixation nifHD region glnB-like protein 1 (105 aa).

The protein belongs to the P(II) protein family.

Its function is as follows. Could be involved in the regulation of nitrogen fixation. In Methanococcus maripaludis (strain DSM 14266 / JCM 13030 / NBRC 101832 / S2 / LL), this protein is Nitrogen fixation nifHD region glnB-like protein 1 (glnBI).